Here is a 369-residue protein sequence, read N- to C-terminus: Peptide chain release factor 2 (369 aa).

Glutamine 252 is subject to N5-methylglutamine.

This sequence belongs to the prokaryotic/mitochondrial release factor family. Methylated by PrmC. Methylation increases the termination efficiency of RF2.

Its subcellular location is the cytoplasm. Its function is as follows. Peptide chain release factor 2 directs the termination of translation in response to the peptide chain termination codons UGA and UAA. This Staphylococcus aureus (strain bovine RF122 / ET3-1) protein is Peptide chain release factor 2.